The following is a 677-amino-acid chain: Nuclear fusion protein FUS2 (677 aa).

Position 20 is a phosphothreonine (Thr-20). Ser-67, Ser-72, and Ser-84 each carry phosphoserine. Thr-88 bears the Phosphothreonine mark. Phosphoserine occurs at positions 100 and 106. Residues 112–326 (KFYKIVQEFY…KYSLFSNKLE (215 aa)) enclose the DH domain.

The protein resides in the cell tip. In terms of biological role, promotes cell fusion during zygote formation. The chain is Nuclear fusion protein FUS2 (FUS2) from Saccharomyces cerevisiae (strain ATCC 204508 / S288c) (Baker's yeast).